The sequence spans 185 residues: MANQIIDQAKVNMGKTEESLQRELGNIRAGRANASLLNQITVEYYGAPTPLNQMAAITIPEPRVLQVSPYDKSSLKNIETALNASDLGINPANDGDVIRLVIPQLTGERRKEIAKEVGKYSESAKIAIRNIRREGLDKLKRQEKDGDITEDDLHRLEKDMQKATDDATKRIDEIAAAKEKEITEV.

This sequence belongs to the RRF family.

It is found in the cytoplasm. Functionally, responsible for the release of ribosomes from messenger RNA at the termination of protein biosynthesis. May increase the efficiency of translation by recycling ribosomes from one round of translation to another. The chain is Ribosome-recycling factor from Lacticaseibacillus casei (strain BL23) (Lactobacillus casei).